The primary structure comprises 237 residues: tRNA (guanine-N(7)-)-methyltransferase (237 aa).

Residues E67, E92, D119, and D141 each coordinate S-adenosyl-L-methionine. Residue D141 is part of the active site. Substrate is bound by residues K145, D177, and 214-217; that span reads TRYE.

It belongs to the class I-like SAM-binding methyltransferase superfamily. TrmB family.

It catalyses the reaction guanosine(46) in tRNA + S-adenosyl-L-methionine = N(7)-methylguanosine(46) in tRNA + S-adenosyl-L-homocysteine. The protein operates within tRNA modification; N(7)-methylguanine-tRNA biosynthesis. In terms of biological role, catalyzes the formation of N(7)-methylguanine at position 46 (m7G46) in tRNA. This Jannaschia sp. (strain CCS1) protein is tRNA (guanine-N(7)-)-methyltransferase.